A 275-amino-acid polypeptide reads, in one-letter code: EFALMVNDFEILKSYLDEGANGIESDITFSDEGEPEYTFHGVPCDCRRWCDRSVGIGEYLQHLSDLTTPGNPKFRENLLVVVLDLKLNGLSQDALRQGGLRLADKLAAHYWTGNRKARAYFIISVPKTSESEFMRTFRKELDEINFGDMSAKIGFDFTDNGDFKETQKVYEGLGISEHIWASDGITNCIPLLLRGTDRLEDLTRQRDEPGYKYIDKVYAWTYDKETSVVKALELGVDGVMTNYADFVIKVLNKPEHSSKYRLATYDDNPFEKFTA.

Positions 24 and 26 each coordinate Mg(2+). The Nucleophile role is filled by His40. 2 disulfide bridges follow: Cys44/Cys50 and Cys46/Cys188. Asp84 contributes to the Mg(2+) binding site.

It belongs to the arthropod phospholipase D family. Class II subfamily. The cofactor is Mg(2+). In terms of tissue distribution, expressed by the venom gland.

The protein localises to the secreted. The enzyme catalyses an N-(acyl)-sphingosylphosphocholine = an N-(acyl)-sphingosyl-1,3-cyclic phosphate + choline. The catalysed reaction is an N-(acyl)-sphingosylphosphoethanolamine = an N-(acyl)-sphingosyl-1,3-cyclic phosphate + ethanolamine. It catalyses the reaction a 1-acyl-sn-glycero-3-phosphocholine = a 1-acyl-sn-glycero-2,3-cyclic phosphate + choline. It carries out the reaction a 1-acyl-sn-glycero-3-phosphoethanolamine = a 1-acyl-sn-glycero-2,3-cyclic phosphate + ethanolamine. Its function is as follows. Dermonecrotic toxins cleave the phosphodiester linkage between the phosphate and headgroup of certain phospholipids (sphingolipid and lysolipid substrates), forming an alcohol (often choline) and a cyclic phosphate. This toxin acts on sphingomyelin (SM). It may also act on ceramide phosphoethanolamine (CPE), lysophosphatidylcholine (LPC) and lysophosphatidylethanolamine (LPE), but not on lysophosphatidylserine (LPS), and lysophosphatidylglycerol (LPG). It acts by transphosphatidylation, releasing exclusively cyclic phosphate products as second products. Induces dermonecrosis, hemolysis, increased vascular permeability, edema, inflammatory response, and platelet aggregation. The protein is Dermonecrotic toxin LspiSicTox-betaIE4i of Loxosceles spinulosa (Recluse spider).